A 367-amino-acid chain; its full sequence is Forkhead box protein I2-B (367 aa).

A compositionally biased stretch (low complexity) spans 31–40; the sequence is QQQNQQLPQR. Residues 31-51 are disordered; sequence QQQNQQLPQRPAAPPAPGYGL. A DNA-binding region (fork-head) is located at residues 124–218; sequence RPPYSYSSLI…DNGNFRRKRK (95 aa). A disordered region spans residues 224-254; sequence VGAGFDEESNEDKKPLALKSLGPDSPGGASV.

Its subcellular location is the nucleus. In terms of biological role, possible transcriptional activator. The polypeptide is Forkhead box protein I2-B (foxi2-b) (Xenopus laevis (African clawed frog)).